A 79-amino-acid polypeptide reads, in one-letter code: Ribonuclease P protein component 1 (79 aa).

This sequence belongs to the eukaryotic/archaeal RNase P protein component 1 family. Consists of a catalytic RNA component and at least 4-5 protein subunits.

Its subcellular location is the cytoplasm. The catalysed reaction is Endonucleolytic cleavage of RNA, removing 5'-extranucleotides from tRNA precursor.. Part of ribonuclease P, a protein complex that generates mature tRNA molecules by cleaving their 5'-ends. This is Ribonuclease P protein component 1 from Saccharolobus solfataricus (strain ATCC 35092 / DSM 1617 / JCM 11322 / P2) (Sulfolobus solfataricus).